The following is a 301-amino-acid chain: Ribonuclease HIII (301 aa).

The region spanning 90–301 (TPHIGIDESG…LDAILGKVGK (212 aa)) is the RNase H type-2 domain. A divalent metal cation is bound by residues Asp96, Glu97, and Asp198.

Belongs to the RNase HII family. RnhC subfamily. Mn(2+) serves as cofactor. The cofactor is Mg(2+).

The protein localises to the cytoplasm. The catalysed reaction is Endonucleolytic cleavage to 5'-phosphomonoester.. Its function is as follows. Endonuclease that specifically degrades the RNA of RNA-DNA hybrids. The polypeptide is Ribonuclease HIII (Protochlamydia amoebophila (strain UWE25)).